Consider the following 1377-residue polypeptide: DNA-directed RNA polymerase subunit beta' (1377 aa).

Zn(2+) is bound by residues Cys70, Cys72, Cys85, and Cys88. Residues Asp460, Asp462, and Asp464 each coordinate Mg(2+). Zn(2+) is bound by residues Cys808, Cys882, Cys889, and Cys892.

Belongs to the RNA polymerase beta' chain family. As to quaternary structure, the RNAP catalytic core consists of 2 alpha, 1 beta, 1 beta' and 1 omega subunit. When a sigma factor is associated with the core the holoenzyme is formed, which can initiate transcription. Mg(2+) is required as a cofactor. It depends on Zn(2+) as a cofactor.

The enzyme catalyses RNA(n) + a ribonucleoside 5'-triphosphate = RNA(n+1) + diphosphate. In terms of biological role, DNA-dependent RNA polymerase catalyzes the transcription of DNA into RNA using the four ribonucleoside triphosphates as substrates. This is DNA-directed RNA polymerase subunit beta' from Geotalea uraniireducens (strain Rf4) (Geobacter uraniireducens).